A 397-amino-acid chain; its full sequence is Enoyl-[acyl-carrier-protein] reductase [NADH] (397 aa).

NAD(+)-binding positions include 48 to 53 (GASTGY), 74 to 75 (FE), 111 to 112 (DA), and 139 to 140 (VA). Position 225 (Y225) interacts with substrate. Y235 (proton donor) is an active-site residue. NAD(+) contacts are provided by residues K244 and 273–275 (VVT).

It belongs to the TER reductase family. As to quaternary structure, monomer.

The enzyme catalyses a 2,3-saturated acyl-[ACP] + NAD(+) = a (2E)-enoyl-[ACP] + NADH + H(+). The protein operates within lipid metabolism; fatty acid biosynthesis. Involved in the final reduction of the elongation cycle of fatty acid synthesis (FAS II). Catalyzes the reduction of a carbon-carbon double bond in an enoyl moiety that is covalently linked to an acyl carrier protein (ACP). In Burkholderia mallei (strain SAVP1), this protein is Enoyl-[acyl-carrier-protein] reductase [NADH].